Reading from the N-terminus, the 373-residue chain is Carboxylesterase/phospholipase LipF (373 aa).

Residues 116–118 (HGG) carry the Involved in the stabilization of the negatively charged intermediate by the formation of the oxyanion hole motif. Catalysis depends on residues serine 186, glutamate 285, and histidine 315.

Belongs to the 'GDXG' lipolytic enzyme family.

The enzyme catalyses a carboxylic ester + H2O = an alcohol + a carboxylate + H(+). The catalysed reaction is a 1,2-diacyl-sn-glycero-3-phosphocholine + H2O = phosphocholine + a 1,2-diacyl-sn-glycerol + H(+). A short-chain esterase and phospholipase. The protein is Carboxylesterase/phospholipase LipF of Mycobacterium tuberculosis (strain CDC 1551 / Oshkosh).